Reading from the N-terminus, the 155-residue chain is Large ribosomal subunit protein eL24 (155 aa).

Positions 87-155 (LELIKERRSQ…SFQKVKATSR (69 aa)) are disordered. Positions 89–129 (LIKERRSQKPSDRKAARDSKLAKDKEAKKAAKAARKAEKAK) are enriched in basic and acidic residues. Over residues 130 to 143 (AVASGASVVSKQQA) the composition is skewed to low complexity.

Belongs to the eukaryotic ribosomal protein eL24 family. Component of the large ribosomal subunit. Mature ribosomes consist of a small (40S) and a large (60S) subunit. The 40S subunit contains about 32 different proteins and 1 molecule of RNA (18S). The 60S subunit contains 45 different proteins and 3 molecules of RNA (25S, 5.8S and 5S).

The protein localises to the cytoplasm. In terms of biological role, component of the ribosome, a large ribonucleoprotein complex responsible for the synthesis of proteins in the cell. The small ribosomal subunit (SSU) binds messenger RNAs (mRNAs) and translates the encoded message by selecting cognate aminoacyl-transfer RNA (tRNA) molecules. The large subunit (LSU) contains the ribosomal catalytic site termed the peptidyl transferase center (PTC), which catalyzes the formation of peptide bonds, thereby polymerizing the amino acids delivered by tRNAs into a polypeptide chain. The nascent polypeptides leave the ribosome through a tunnel in the LSU and interact with protein factors that function in enzymatic processing, targeting, and the membrane insertion of nascent chains at the exit of the ribosomal tunnel. This chain is Large ribosomal subunit protein eL24, found in Candida albicans (strain SC5314 / ATCC MYA-2876) (Yeast).